Reading from the N-terminus, the 589-residue chain is Probable arginine--tRNA ligase, cytoplasmic (589 aa).

L-arginine-binding positions include 121 to 123 (SPN), H132, Y332, D336, and Q360. Residues 121–132 (SPNIAKPFHAGH) carry the 'HIGH' region motif. Positions 469–483 (DTGPYLQYAHARLCS) are interaction with tRNA.

Belongs to the class-I aminoacyl-tRNA synthetase family.

The protein resides in the cytoplasm. It localises to the cytosol. It catalyses the reaction tRNA(Arg) + L-arginine + ATP = L-arginyl-tRNA(Arg) + AMP + diphosphate. In terms of biological role, forms part of a macromolecular complex that catalyzes the attachment of specific amino acids to cognate tRNAs during protein synthesis. The chain is Probable arginine--tRNA ligase, cytoplasmic (argS1) from Dictyostelium discoideum (Social amoeba).